The chain runs to 880 residues: Translation initiation factor IF-2 (880 aa).

The segment covering E143 to I228 has biased composition (basic and acidic residues). Residues E143–N289 are disordered. Over residues G249 to G262 the composition is skewed to basic residues. One can recognise a tr-type G domain in the interval S380–K549. The G1 stretch occupies residues G389–T396. Residue G389 to T396 coordinates GTP. Positions G414–H418 are G2. Positions D435–G438 are G3. GTP contacts are provided by residues D435–H439 and N489–D492. The interval N489–D492 is G4. Residues S525–K527 are G5.

This sequence belongs to the TRAFAC class translation factor GTPase superfamily. Classic translation factor GTPase family. IF-2 subfamily.

Its subcellular location is the cytoplasm. One of the essential components for the initiation of protein synthesis. Protects formylmethionyl-tRNA from spontaneous hydrolysis and promotes its binding to the 30S ribosomal subunits. Also involved in the hydrolysis of GTP during the formation of the 70S ribosomal complex. This chain is Translation initiation factor IF-2, found in Shewanella putrefaciens (strain CN-32 / ATCC BAA-453).